The primary structure comprises 639 residues: Mediator of RNA polymerase II transcription subunit 17 (639 aa).

Residues 160–187 adopt a coiled-coil conformation; the sequence is RLQSFNAAADKLLKSASRLENEVASETR.

The protein belongs to the Mediator complex subunit 17 family. As to quaternary structure, component of the Mediator complex.

It localises to the nucleus. Component of the Mediator complex, a coactivator involved in the regulated transcription of nearly all RNA polymerase II-dependent genes. Mediator functions as a bridge to convey information from gene-specific regulatory proteins to the basal RNA polymerase II transcription machinery. Mediator is recruited to promoters by direct interactions with regulatory proteins and serves as a scaffold for the assembly of a functional preinitiation complex with RNA polymerase II and the general transcription factors. This Aspergillus fumigatus (strain ATCC MYA-4609 / CBS 101355 / FGSC A1100 / Af293) (Neosartorya fumigata) protein is Mediator of RNA polymerase II transcription subunit 17 (srb4).